A 544-amino-acid polypeptide reads, in one-letter code: Cytochrome P450 monooxygenase verL (544 aa).

The helical transmembrane segment at valine 3 to tryptophan 23 threads the bilayer. Cysteine 446 is a binding site for heme. A disordered region spans residues glutamine 520 to arginine 544.

Belongs to the cytochrome P450 family. Heme serves as cofactor.

Its subcellular location is the membrane. The protein operates within mycotoxin biosynthesis. Its function is as follows. Cytochrome P450 monooxygenase; part of the gene cluster that mediates the biosynthesis of 11'-deoxyverticillin A, one of the dimeric epipolythiodioxopiperazines (ETPs) from the verticillin family that act as mycotoxins. 11'-deoxyverticillin A is required for normal conidiation. The nonribosomal peptide synthetase verP is speculated to be responsible for condensation of amino acids to form the carbon skeleton of verticillin, whereas the cluster-specific tailoring enzymes are involved in further modifications leading to the production of 11'-deoxyverticillin A. In Clonostachys rogersoniana, this protein is Cytochrome P450 monooxygenase verL.